A 788-amino-acid polypeptide reads, in one-letter code: MSSHTVSTSLAVATLGTPRIGPRRELKSALESFWAGKSTEADLLKVAAALRAANWARQSARGVSVIPSNDFSLYDQVLDTSVMVGAIPEIYGWRGGPVSLATYFAMARGTQAEIAGHGCANGHHHGDSTPQGVPAQEMTKWFDTNYHYMVPEFSAGQSFQLASLKPLEEYREAKALGYDTRPVLLGPVTYLKLGKSADARLDVLSLLPKLVPVYIEILGRLAAAGAKWVQLDEPALVLDLDDRERLAFRDAYGQIARELPHLDIMLTTYFGGLGDNLDTALALPIAGLHLDLVRAPKQINAVIAKGPKDLVLSLGVVDGRNIWRADLPDLLDRVEPIVQQRGAERVQLAPSCSLLHVPVDLELETGLDPDLKSWLSFSLQKMGELSTLSGALSGDRAAVQDQLSASAKAAATRRKSPKVHDMAVSSRAAAVTPAMTQRNSGFAARATLQHQRLQLPAFPTTTIGSFPQTAQIRQARAAHAKGAISDADYNTFLRGETARAIQWQEKVGLDVLVHGEFERNDMVQYFGEQLSGFAFTKEGWVQSYGSRCVRPPILFGDVSRPKPMTVGWWKYAQSLTGRPMKGMLTGPVTILNWSFVRDDVPRSTACLQIALAIRDEVGDLEQAGATMIQIDEAALREGLPLRRSEWKGYLDWAVECFRLCSSGVKDETQIHTHMCYSEFNDIIDAIAAMDADVISIETSRSKMELLDAFKTYKYPNEIGPGVYDIHSPRVPSVEEMTTLLQLARQRLSDGQLWVNPDCGLKTRGWDEVQGALVNMVEAARQIRQVSAG.

Residues 24–27 and K140 contribute to the 5-methyltetrahydropteroyltri-L-glutamate site; that span reads RELK. Residues 463–465 and E516 each bind L-homocysteine; that span reads IGS. L-methionine contacts are provided by residues 463–465 and E516; that span reads IGS. 5-methyltetrahydropteroyltri-L-glutamate is bound by residues 547-548 and W593; that span reads RC. D631 is an L-homocysteine binding site. D631 is an L-methionine binding site. E637 contacts 5-methyltetrahydropteroyltri-L-glutamate. The Zn(2+) site is built by H673, C675, and E697. Residue H726 is the Proton donor of the active site. C758 contacts Zn(2+).

The protein belongs to the vitamin-B12 independent methionine synthase family. The cofactor is Zn(2+).

It catalyses the reaction 5-methyltetrahydropteroyltri-L-glutamate + L-homocysteine = tetrahydropteroyltri-L-glutamate + L-methionine. The protein operates within amino-acid biosynthesis; L-methionine biosynthesis via de novo pathway; L-methionine from L-homocysteine (MetE route): step 1/1. Catalyzes the transfer of a methyl group from 5-methyltetrahydrofolate to homocysteine resulting in methionine formation. The chain is 5-methyltetrahydropteroyltriglutamate--homocysteine methyltransferase from Rhodopseudomonas palustris (strain TIE-1).